The sequence spans 227 residues: Inner membrane lipoprotein SadB (227 aa).

A signal peptide spans 1–21 (MHKNGKFIPLLALGFTFFLSG). Cys-22 is lipidated: N-palmitoyl cysteine. The S-diacylglycerol cysteine moiety is linked to residue Cys-22. Positions 31–68 (VEEMKEQQKEQETKINLLEKQQKEQEAKINLLEKQQAT) form a coiled coil.

As to quaternary structure, homotrimer.

The protein resides in the cell inner membrane. Its function is as follows. Required for proper surface expression of the autotransporter adhesin SadA. Could be directly involved in the biogenesis of functionally active SadA. In Salmonella typhimurium (strain LT2 / SGSC1412 / ATCC 700720), this protein is Inner membrane lipoprotein SadB.